A 263-amino-acid chain; its full sequence is Putative cysteine-rich repeat secretory protein 31 (263 aa).

The signal sequence occupies residues 1 to 32 (MHNSYSLSKRLVLVLFLAVVATQLFLIRNVSS). 2 consecutive Gnk2-homologous domains span residues 39 to 141 (YLHH…AIEV) and 146 to 260 (YDNN…FYPF).

Belongs to the cysteine-rich repeat secretory protein family.

The protein resides in the secreted. The chain is Putative cysteine-rich repeat secretory protein 31 (CRRSP31) from Arabidopsis thaliana (Mouse-ear cress).